Consider the following 404-residue polypeptide: Cysteine desulfurase IscS (404 aa).

Residues 75-76, Asn155, Gln183, and 203-205 contribute to the pyridoxal 5'-phosphate site; these read AT and SAH. Lys206 carries the N6-(pyridoxal phosphate)lysine modification. Thr243 contributes to the pyridoxal 5'-phosphate binding site. Residue Cys328 is the Cysteine persulfide intermediate of the active site. Cys328 is a [2Fe-2S] cluster binding site.

The protein belongs to the class-V pyridoxal-phosphate-dependent aminotransferase family. NifS/IscS subfamily. As to quaternary structure, homodimer. Forms a heterotetramer with IscU, interacts with other sulfur acceptors. Requires pyridoxal 5'-phosphate as cofactor.

Its subcellular location is the cytoplasm. The catalysed reaction is (sulfur carrier)-H + L-cysteine = (sulfur carrier)-SH + L-alanine. Its pathway is cofactor biosynthesis; iron-sulfur cluster biosynthesis. Master enzyme that delivers sulfur to a number of partners involved in Fe-S cluster assembly, tRNA modification or cofactor biosynthesis. Catalyzes the removal of elemental sulfur atoms from cysteine to produce alanine. Functions as a sulfur delivery protein for Fe-S cluster synthesis onto IscU, an Fe-S scaffold assembly protein, as well as other S acceptor proteins. The sequence is that of Cysteine desulfurase IscS from Vibrio cholerae serotype O1 (strain M66-2).